The following is a 629-amino-acid chain: tRNA uridine 5-carboxymethylaminomethyl modification enzyme MnmG (629 aa).

13 to 18 (GGGHAG) lines the FAD pocket. 273–287 (GPRYCPSIEDKITRF) provides a ligand contact to NAD(+).

It belongs to the MnmG family. As to quaternary structure, homodimer. Heterotetramer of two MnmE and two MnmG subunits. It depends on FAD as a cofactor.

It is found in the cytoplasm. Its function is as follows. NAD-binding protein involved in the addition of a carboxymethylaminomethyl (cmnm) group at the wobble position (U34) of certain tRNAs, forming tRNA-cmnm(5)s(2)U34. The chain is tRNA uridine 5-carboxymethylaminomethyl modification enzyme MnmG from Colwellia psychrerythraea (strain 34H / ATCC BAA-681) (Vibrio psychroerythus).